We begin with the raw amino-acid sequence, 189 residues long: Ras-like protein rasC (189 aa).

11 to 18 provides a ligand contact to GTP; that stretch reads GDGGVGKS. The Effector region signature appears at 33 to 41; sequence YDPTIENSY. Residues 58-62 and 117-120 each bind GTP; these read DTAGQ and NKAD. Cysteine 186 is subject to Cysteine methyl ester. The S-geranylgeranyl cysteine moiety is linked to residue cysteine 186. Positions 187 to 189 are cleaved as a propeptide — removed in mature form; it reads IIL.

The protein belongs to the small GTPase superfamily. Ras family.

The protein localises to the cell membrane. The catalysed reaction is GTP + H2O = GDP + phosphate + H(+). Its activity is regulated as follows. Alternates between an inactive form bound to GDP and an active form bound to GTP. Activated by a guanine nucleotide-exchange factor (GEF) and inactivated by a GTPase-activating protein (GAP). Functionally, ras proteins bind GDP/GTP and possess intrinsic GTPase activity. The sequence is that of Ras-like protein rasC (rasC) from Dictyostelium discoideum (Social amoeba).